Reading from the N-terminus, the 1074-residue chain is Pleckstrin homology domain-containing family M member 1 (1074 aa).

The region spanning 40-182 (TSEDGDANTM…LSFELSYKSA (143 aa)) is the RUN domain. 3 disordered regions span residues 214 to 244 (QRKE…RRNR), 272 to 336 (LQEN…MFQT), and 382 to 454 (DEKQ…PPQE). A Phosphoserine modification is found at S218. Polar residues-rich tracts occupy residues 313–329 (SKAQ…NQEP) and 393–404 (PAQSTSDQQPSS). 3 positions are modified to phosphoserine: S433, S436, and S491. Residues 506 to 526 (GNAQPAPAPAPAPAPAPAPAP) form a disordered region. The segment covering 511 to 525 (APAPAPAPAPAPAPA) has biased composition (pro residues). The PH 1 domain occupies 551–642 (GLMKLGTVAR…WLDRVREALQ (92 aa)). The LIR signature appears at 649 to 655 (EDEWVNI). Positions 661–680 (AEDAPEAPPDSLPPYSTLLP) are disordered. The tract at residues 672-1074 (LPPYSTLLPE…RKYQEQNVVS (403 aa)) is interaction with RAB7A. In terms of domain architecture, PH 2 spans 701–795 (DAIKESLLYL…WRDLVRKVLA (95 aa)). The Phorbol-ester/DAG-type zinc finger occupies 1004–1058 (QHVYHCDLCTQRGFICQICHHQDIIFPFEFDTTVRCAECRTVFHQSCQAVVRKGC).

In terms of assembly, interacts (via N- and C-terminus) with RAB7A (GTP-bound form). Simultaneously interacts with RAB7A and ARL8B; bringing about clustering and fusion of late endosomes and lysosomes. Interacts (via RUN domain) with ARL8B (GTP-bound form); the interaction is required for PLEKHM1 localization to lysosomes and for ARL8B function in delivery and degradation of endocytic and autophagic cargo in lysosomes. PLEKHM1 and PLEKHM2 compete for interaction with ARL8B. Interacts with ARL8A; the interaction is weaker than with ARL8B. Interacts with VPS41, VPS11, VPS18, VPS33A and VPS39; indicative for an association with the HOPS complex; the interactions with, at least, VPS41, VPS11, VPS18 and VPS33A require ARL8B. Interacts with GABARAP, GABARAPL, GABARAPL2, MAP1LC3A, MAP1LC3B and MAP1LC3C. Interacts with PAFAH1B. Interacts (via N- and C-terminus) with NDEL1. Interacts (via C-terminus) with MAP3K7. Interacts (via N- and C-terminus) with FAM98A. Interacts (via C-terminus) with DEF8; this interaction is weak but increased in a RAB7A-dependent manner. May interact with sialyl-lex-positive protein.

It is found in the autolysosome membrane. It localises to the endosome membrane. Its subcellular location is the late endosome membrane. The protein localises to the lysosome membrane. Its function is as follows. Acts as a multivalent adapter protein that regulates Rab7-dependent and HOPS complex-dependent fusion events in the endolysosomal system and couples autophagic and the endocytic trafficking pathways. Acts as a dual effector of RAB7A and ARL8B that simultaneously binds these GTPases, bringing about clustering and fusion of late endosomes and lysosomes. Required for late stages of endolysosomal maturation, facilitating both endocytosis-mediated degradation of growth factor receptors and autophagosome clearance. Interaction with Arl8b is a crucial factor in the terminal maturation of autophagosomes and to mediate autophagosome-lysosome fusion. Positively regulates lysosome peripheral distribution and ruffled border formation in osteoclasts. May be involved in negative regulation of endocytic transport from early endosome to late endosome/lysosome implicating its association with Rab7. May have a role in sialyl-lex-mediated transduction of apoptotic signals. Involved in bone resorption. The polypeptide is Pleckstrin homology domain-containing family M member 1 (Mus musculus (Mouse)).